The chain runs to 400 residues: Outer membrane protein alpha (400 aa).

The N-terminal stretch at 1–20 (MKRVLLTVAMLSVFFSAMFA) is a signal peptide. An SLH domain is found at 21 to 81 (FFPDVPKDHW…DFIEQKMLAG (61 aa)). Residues 85 to 379 (DLAQVVGNLS…ESVKAYNRNL (295 aa)) are a coiled coil. 3 consecutive repeat copies span residues 208–232 (VNLH…LNNK), 251–275 (VELH…LNKK), and 326–350 (VDLH…LNMK). Residues 208 to 350 (VNLHEKDIIN…SSLEEDLNMK (143 aa)) are 3 X 25 AA approximate repeat. The helical transmembrane segment at 380–400 (SILTGAFFGILGLILIAISGK) threads the bilayer.

As to quaternary structure, homotetramer.

It localises to the cell outer membrane. Its function is as follows. Links the outer membrane to the inner membrane. Long fibrous protein that could serve to separate the two membranes. The sequence is that of Outer membrane protein alpha (omp-alpha) from Thermotoga maritima (strain ATCC 43589 / DSM 3109 / JCM 10099 / NBRC 100826 / MSB8).